Consider the following 30-residue polypeptide: Root cyclotide 1 (30 aa).

Positions 1 to 30 form a cross-link, cyclopeptide (Gly-Asn); the sequence is GIPCAESCVWIPCTVTALLGCSCSNKVCYN. Cystine bridges form between Cys-4–Cys-21, Cys-8–Cys-23, and Cys-13–Cys-28.

Post-translationally, this is a cyclic peptide. In terms of tissue distribution, expressed in roots.

Its function is as follows. Probably participates in a plant defense mechanism. This chain is Root cyclotide 1, found in Viola hederacea (Australian violet).